The primary structure comprises 309 residues: tRNA dimethylallyltransferase (309 aa).

ATP is bound at residue 9-16 (GPTAVGKT). A substrate-binding site is contributed by 11 to 16 (TAVGKT). The interaction with substrate tRNA stretch occupies residues 34-37 (DSMQ).

Belongs to the IPP transferase family. As to quaternary structure, monomer. Mg(2+) is required as a cofactor.

It carries out the reaction adenosine(37) in tRNA + dimethylallyl diphosphate = N(6)-dimethylallyladenosine(37) in tRNA + diphosphate. Catalyzes the transfer of a dimethylallyl group onto the adenine at position 37 in tRNAs that read codons beginning with uridine, leading to the formation of N6-(dimethylallyl)adenosine (i(6)A). The protein is tRNA dimethylallyltransferase of Clostridium kluyveri (strain NBRC 12016).